A 762-amino-acid polypeptide reads, in one-letter code: MTTIKTSNLGFPRIGLNREWKKALEAYWKGSTDKDTFLKQIDELFLSAVKTQIDQQIDVVPVSDFTQYDHVLDTAVSFNWIPKRFRHLTDATDTYFAIARGIKDAVSSEMTKWFNTNYHYIVPEYDESIEFRLTRNKQLEDYRRIKQEYGVETKPVIVGPYTFVTLAKGYEPSEAKAIQKRLVPLYVQLLKELEEEGVKWVQIDEPALVTASSEDVRGAKELFESITSELSSLNVLLQTYFDSVDAYEELISYPVQGIGLDFVHDKGRNLEQLKTHGFPTDKVLAAGVIDGRNIWKADLEERLDAVLDILSIAKVDELWIQPSSSLLHVPVAKHPDEHLEKDLLNGLSYAKEKLAELTALKEGLVSGKAAISEEIQQAKADIQALKQFATGANSEQKKELEQLTDKDFKRPIPFEERLALQNESLGLPLLPTTTIGSFPQSAEVRSARQKWRKAEWSDEQYQNFINAETKRWIDIQEELELDVLVHGEFERTDMVEYFGEKLAGFAFTKYAWVQSYGSRCVRPPVIYGDVEFIEPMTVKDTVYAQSLTSKHVKGMLTGPVTILNWSFPRNDISRKEIAFQIGLALRKEVKALEDAGIQIIQVDEPALREGLPLKTRDWDEYLTWAAEAFRLTTSSVKNETQIHTHMCYSNFEDIVDTINDLDADVITIEHSRSHGGFLDYLKNHPYLKGLGLGVYDIHSPRVPSTEEMYNIIVDALAVCPTDRFWVNPDCGLKTRQQEETVAALKNMVEAAKQARAQQTQLV.

Residues 18–21 (REWK) and K112 each bind 5-methyltetrahydropteroyltri-L-glutamate. L-homocysteine is bound by residues 435–437 (IGS) and E488. L-methionine contacts are provided by residues 435-437 (IGS) and E488. 5-methyltetrahydropteroyltri-L-glutamate contacts are provided by residues 519–520 (RC) and W565. D603 contacts L-homocysteine. D603 contacts L-methionine. Residue E609 participates in 5-methyltetrahydropteroyltri-L-glutamate binding. Zn(2+)-binding residues include H645, C647, and E669. The Proton donor role is filled by H698. The residue at position 719 (C719) is an S-bacillithiol cysteine disulfide. C730 contributes to the Zn(2+) binding site.

This sequence belongs to the vitamin-B12 independent methionine synthase family. Zn(2+) is required as a cofactor. In response to oxidative stress, Cys-719 can react with bacillithiol (BSH) to form mixed disulfides. S-bacillithiolation leads to loss of catalytic activity and methionine auxotrophy.

The enzyme catalyses 5-methyltetrahydropteroyltri-L-glutamate + L-homocysteine = tetrahydropteroyltri-L-glutamate + L-methionine. Its pathway is amino-acid biosynthesis; L-methionine biosynthesis via de novo pathway; L-methionine from L-homocysteine (MetE route): step 1/1. Its function is as follows. Catalyzes the transfer of a methyl group from 5-methyltetrahydrofolate to homocysteine resulting in methionine formation. The chain is 5-methyltetrahydropteroyltriglutamate--homocysteine methyltransferase from Bacillus subtilis (strain 168).